Reading from the N-terminus, the 363-residue chain is UDP-N-acetylglucosamine--N-acetylmuramyl-(pentapeptide) pyrophosphoryl-undecaprenol N-acetylglucosamine transferase (363 aa).

Residues 10-12 (TGG), Asn-124, Ser-195, Ile-250, and Gln-295 contribute to the UDP-N-acetyl-alpha-D-glucosamine site.

The protein belongs to the glycosyltransferase 28 family. MurG subfamily.

The protein localises to the cell membrane. The enzyme catalyses Mur2Ac(oyl-L-Ala-gamma-D-Glu-L-Lys-D-Ala-D-Ala)-di-trans,octa-cis-undecaprenyl diphosphate + UDP-N-acetyl-alpha-D-glucosamine = beta-D-GlcNAc-(1-&gt;4)-Mur2Ac(oyl-L-Ala-gamma-D-Glu-L-Lys-D-Ala-D-Ala)-di-trans,octa-cis-undecaprenyl diphosphate + UDP + H(+). It participates in cell wall biogenesis; peptidoglycan biosynthesis. In terms of biological role, cell wall formation. Catalyzes the transfer of a GlcNAc subunit on undecaprenyl-pyrophosphoryl-MurNAc-pentapeptide (lipid intermediate I) to form undecaprenyl-pyrophosphoryl-MurNAc-(pentapeptide)GlcNAc (lipid intermediate II). This is UDP-N-acetylglucosamine--N-acetylmuramyl-(pentapeptide) pyrophosphoryl-undecaprenol N-acetylglucosamine transferase from Lactiplantibacillus plantarum (strain ATCC BAA-793 / NCIMB 8826 / WCFS1) (Lactobacillus plantarum).